The primary structure comprises 33 residues: Cytochrome b6-f complex subunit 8 (33 aa).

The helical transmembrane segment at 2–22 threads the bilayer; the sequence is LFTLAWASLAAVFSFSIAMVV.

It belongs to the PetN family. In terms of assembly, the 4 large subunits of the cytochrome b6-f complex are cytochrome b6, subunit IV (17 kDa polypeptide, PetD), cytochrome f and the Rieske protein, while the 4 small subunits are PetG, PetL, PetM and PetN. The complex functions as a dimer.

It localises to the cellular thylakoid membrane. Its function is as follows. Component of the cytochrome b6-f complex, which mediates electron transfer between photosystem II (PSII) and photosystem I (PSI), cyclic electron flow around PSI, and state transitions. The chain is Cytochrome b6-f complex subunit 8 from Synechococcus sp. (strain WH7803).